Consider the following 613-residue polypeptide: Dihydroxy-acid dehydratase (613 aa).

Position 81 (Asp81) interacts with Mg(2+). Cys122 is a [2Fe-2S] cluster binding site. The Mg(2+) site is built by Asp123 and Lys124. Lys124 is subject to N6-carboxylysine. Cys195 is a [2Fe-2S] cluster binding site. Glu491 is a binding site for Mg(2+). Ser517 acts as the Proton acceptor in catalysis.

Belongs to the IlvD/Edd family. In terms of assembly, homodimer. The cofactor is [2Fe-2S] cluster. It depends on Mg(2+) as a cofactor.

It catalyses the reaction (2R)-2,3-dihydroxy-3-methylbutanoate = 3-methyl-2-oxobutanoate + H2O. It carries out the reaction (2R,3R)-2,3-dihydroxy-3-methylpentanoate = (S)-3-methyl-2-oxopentanoate + H2O. It functions in the pathway amino-acid biosynthesis; L-isoleucine biosynthesis; L-isoleucine from 2-oxobutanoate: step 3/4. The protein operates within amino-acid biosynthesis; L-valine biosynthesis; L-valine from pyruvate: step 3/4. In terms of biological role, functions in the biosynthesis of branched-chain amino acids. Catalyzes the dehydration of (2R,3R)-2,3-dihydroxy-3-methylpentanoate (2,3-dihydroxy-3-methylvalerate) into 2-oxo-3-methylpentanoate (2-oxo-3-methylvalerate) and of (2R)-2,3-dihydroxy-3-methylbutanoate (2,3-dihydroxyisovalerate) into 2-oxo-3-methylbutanoate (2-oxoisovalerate), the penultimate precursor to L-isoleucine and L-valine, respectively. In Buchnera aphidicola subsp. Melaphis rhois, this protein is Dihydroxy-acid dehydratase.